A 60-amino-acid chain; its full sequence is Prokaryotic ubiquitin-like protein UBact (60 aa).

Residues 1 to 60 are disordered; that stretch reads MPERKTQPTTDQPWTKPNDGGDESGPRSPEVERPNTRDLLERMKRVDPRQARRYRQRSGE. The segment covering 29–50 has biased composition (basic and acidic residues); it reads PEVERPNTRDLLERMKRVDPRQ. The span at 51-60 shows a compositional bias: basic residues; the sequence is ARRYRQRSGE. Glutamate 60 is covalently cross-linked (Isoglutamyl lysine isopeptide (Glu-Lys) (interchain with K-? in acceptor proteins)).

Belongs to the ubiquitin-like protein UBact family.

Its function is as follows. May function as a protein modifier covalently attached to lysine residues of substrate proteins. This may serve to target the modified proteins for degradation by proteasomes. This Fraserbacteria sp. (strain RBG_16_55_9) protein is Prokaryotic ubiquitin-like protein UBact.